A 439-amino-acid polypeptide reads, in one-letter code: Trigger factor (439 aa).

In terms of domain architecture, PPIase FKBP-type spans 175–260; the sequence is GDRVTISYRS…VERLSVKDEI (86 aa).

The protein belongs to the FKBP-type PPIase family. Tig subfamily.

It localises to the cytoplasm. The enzyme catalyses [protein]-peptidylproline (omega=180) = [protein]-peptidylproline (omega=0). Functionally, involved in protein export. Acts as a chaperone by maintaining the newly synthesized protein in an open conformation. Functions as a peptidyl-prolyl cis-trans isomerase. The sequence is that of Trigger factor from Anaplasma phagocytophilum (strain HZ).